The primary structure comprises 208 residues: NAD(P)H-quinone oxidoreductase subunit I (208 aa).

2 4Fe-4S ferredoxin-type domains span residues glycine 55–valine 84 and arginine 95–glutamate 124. [4Fe-4S] cluster is bound by residues cysteine 64, cysteine 67, cysteine 70, cysteine 74, cysteine 104, cysteine 107, cysteine 110, and cysteine 114.

It belongs to the complex I 23 kDa subunit family. In terms of assembly, NDH-1 is composed of at least 11 different subunits. The cofactor is [4Fe-4S] cluster.

Its subcellular location is the cellular thylakoid membrane. It catalyses the reaction a plastoquinone + NADH + (n+1) H(+)(in) = a plastoquinol + NAD(+) + n H(+)(out). The enzyme catalyses a plastoquinone + NADPH + (n+1) H(+)(in) = a plastoquinol + NADP(+) + n H(+)(out). Functionally, NDH-1 shuttles electrons from an unknown electron donor, via FMN and iron-sulfur (Fe-S) centers, to quinones in the respiratory and/or the photosynthetic chain. The immediate electron acceptor for the enzyme in this species is believed to be plastoquinone. Couples the redox reaction to proton translocation, and thus conserves the redox energy in a proton gradient. This chain is NAD(P)H-quinone oxidoreductase subunit I, found in Prochlorococcus marinus (strain MIT 9515).